The chain runs to 411 residues: MSVFTKSAFTMSALPSPNTSQPPSAAPSRRGSFANGLASGQLTPVTDPHIVSINVESVLFDMDGTLINSSPAVVKAWELFAEKYPLDLDDILRSAHGMRTIDVLKKWCKITDPELLASEVIRFETAILNSAEDIAKHSGKAGIEVLPGVAKLLADLGEEADKRDGEEKWAICTSSTYFYAGKAIPIAGLPTPKVFVTADSVTRGKPFPDPYLLGASGCNASPFESLVVEDAPTGIRSGKASGALVLATCTSHEREELERERPDFLVDDLSHVKASWDAATNTFNLIIEQPIDRYTPRPTPDVTPVITPAMSRSNSFSGVGQDRPSVRNTQTIMKGSDDLTGNDSVVGSPAASRPGSPGADDSVEKRAEMEFHRRASQSGQAGVTLDAFRRALAGNAAKRRAQSQGEMSQDE.

Residues 14 to 23 show a composition bias toward polar residues; sequence LPSPNTSQPP. The tract at residues 14–33 is disordered; sequence LPSPNTSQPPSAAPSRRGSF. Aspartate 61 (nucleophile) is an active-site residue. Mg(2+) is bound by residues aspartate 61, aspartate 63, and aspartate 338. The active-site Proton donor is the aspartate 63. The interval 296 to 386 is disordered; sequence PRPTPDVTPV…QSGQAGVTLD (91 aa). Residues 326–345 show a composition bias toward polar residues; that stretch reads VRNTQTIMKGSDDLTGNDSV. Positions 362 to 373 are enriched in basic and acidic residues; the sequence is SVEKRAEMEFHR.

The protein belongs to the HAD-like hydrolase superfamily. Phosphorylated.

Its function is as follows. Probable phosphatase. Required for cell wall integrity and virulence. The sequence is that of Probable phosphatase HAD1 from Cryptococcus neoformans var. grubii serotype A (strain H99 / ATCC 208821 / CBS 10515 / FGSC 9487) (Filobasidiella neoformans var. grubii).